We begin with the raw amino-acid sequence, 692 residues long: DNA topoisomerase 4 subunit B (692 aa).

ATP is bound by residues tyrosine 53, asparagine 93, aspartate 120, 162-168 (GLHGVGI), and lysine 393. The Toprim domain occupies 473 to 587 (AELFIVEGDS…AGHLYLAVPP (115 aa)). Mg(2+) is bound by residues glutamate 479, aspartate 552, and aspartate 554.

Belongs to the type II topoisomerase family. ParE type 1 subfamily. In terms of assembly, heterotetramer composed of ParC and ParE. Requires Mg(2+) as cofactor. It depends on Mn(2+) as a cofactor. The cofactor is Ca(2+).

The catalysed reaction is ATP-dependent breakage, passage and rejoining of double-stranded DNA.. Topoisomerase IV is essential for chromosome segregation. It relaxes supercoiled DNA. Performs the decatenation events required during the replication of a circular DNA molecule. This chain is DNA topoisomerase 4 subunit B, found in Bartonella bacilliformis (strain ATCC 35685 / KC583 / Herrer 020/F12,63).